The chain runs to 285 residues: Coagulation factor IX (285 aa).

Tyr-23 is subject to Sulfotyrosine. An N-linked (GlcNAc...) asparagine glycan is attached at Asn-25. A Phosphothreonine; alternate modification is found at Thr-27. Thr-27 carries an O-linked (GalNAc...) threonine; alternate glycan. The N-linked (GlcNAc...) asparagine glycan is linked to Asn-45. O-linked (GalNAc...) threonine glycosylation is present at Thr-47. One can recognise a Peptidase S1 domain in the interval 59 to 285; the sequence is VVGGEDAKPG…YTKVSRYVNW (227 aa). Cys-84 and Cys-100 are disulfide-bonded. Catalysis depends on His-99, which acts as the Charge relay system. Asn-115, Glu-120, and Glu-123 together coordinate Ca(2+). Residues Asn-127 and Asn-138 are each glycosylated (N-linked (GlcNAc...) asparagine). The active-site Charge relay system is the Asp-147. Disulfide bonds link Cys-214–Cys-228 and Cys-239–Cys-267. Ser-243 (charge relay system) is an active-site residue.

This sequence belongs to the peptidase S1 family. Heterodimer of a light chain and a heavy chain; disulfide-linked. Interacts (inactive and activated) with F11 (activated) in calcium-dependent manner. Interacts with SERPINC1. Activated by factor XIa, which excises the activation peptide. The propeptide can also be removed by snake venom protease. Activated by coagulation factor VIIa-tissue factor (F7-F3) complex in calcium-dependent manner.

It is found in the secreted. The catalysed reaction is Selective cleavage of Arg-|-Ile bond in factor X to form factor Xa.. Factor IX is a vitamin K-dependent plasma protein that participates in the intrinsic pathway of blood coagulation by converting factor X to its active form in the presence of Ca(2+) ions, phospholipids, and factor VIIIa. This chain is Coagulation factor IX (F9), found in Cavia porcellus (Guinea pig).